The chain runs to 256 residues: Ras-related protein RabJ (256 aa).

16 to 23 lines the GTP pocket; sequence GSSDVGKT. Positions 38–46 match the Effector region motif; the sequence is LTSTIGASF. GTP-binding positions include 64–68 and 122–125; these read DSAGQ and NKID. A disordered region spans residues 229–256; it reads NGHLQGSINGHNNQNSTNYSDNSDQCCG. Residues 230–256 show a composition bias toward polar residues; sequence GHLQGSINGHNNQNSTNYSDNSDQCCG. Residues Cys254 and Cys255 are each lipidated (S-geranylgeranyl cysteine).

Belongs to the small GTPase superfamily. Rab family.

The protein resides in the cell membrane. The sequence is that of Ras-related protein RabJ (rabJ) from Dictyostelium discoideum (Social amoeba).